Consider the following 590-residue polypeptide: Aspartate--tRNA(Asp/Asn) ligase (590 aa).

Glu-182 serves as a coordination point for L-aspartate. Residues 206 to 209 are aspartate; the sequence is QLFK. Arg-228 contributes to the L-aspartate binding site. Residues 228 to 230 and Gln-237 each bind ATP; that span reads RDE. His-454 contributes to the L-aspartate binding site. ATP is bound at residue Glu-488. Residue Arg-495 participates in L-aspartate binding. Position 540-543 (540-543) interacts with ATP; it reads GLDR.

Belongs to the class-II aminoacyl-tRNA synthetase family. Type 1 subfamily. In terms of assembly, homodimer.

Its subcellular location is the cytoplasm. It catalyses the reaction tRNA(Asx) + L-aspartate + ATP = L-aspartyl-tRNA(Asx) + AMP + diphosphate. Aspartyl-tRNA synthetase with relaxed tRNA specificity since it is able to aspartylate not only its cognate tRNA(Asp) but also tRNA(Asn). Reaction proceeds in two steps: L-aspartate is first activated by ATP to form Asp-AMP and then transferred to the acceptor end of tRNA(Asp/Asn). The chain is Aspartate--tRNA(Asp/Asn) ligase from Halothermothrix orenii (strain H 168 / OCM 544 / DSM 9562).